Consider the following 370-residue polypeptide: Putative F-box protein At1g46984 (370 aa).

The region spanning 18 to 64 is the F-box domain; sequence YTQLSTLPIDLIIEILSRLPMNSIAICRLVSKQWASILQSSDFTESF.

The protein is Putative F-box protein At1g46984 of Arabidopsis thaliana (Mouse-ear cress).